The primary structure comprises 387 residues: Chaperone protein DnaJ (387 aa).

The J domain occupies 5–70; the sequence is DYYEVLGVAK…QKRAAYDRFG (66 aa). The CR-type zinc-finger motif lies at 140-218; that stretch reads GKTETIRLPT…CGGAGRVTRE (79 aa). Zn(2+)-binding residues include C153, C156, C170, C173, C192, C195, C206, and C209. 4 CXXCXGXG motif repeats span residues 153 to 160, 170 to 177, 192 to 199, and 206 to 213; these read CEVCAGSG, CPTCGGYG, CPNCQGRG, and CAACGGAG.

This sequence belongs to the DnaJ family. Homodimer. Zn(2+) serves as cofactor.

It localises to the cytoplasm. Participates actively in the response to hyperosmotic and heat shock by preventing the aggregation of stress-denatured proteins and by disaggregating proteins, also in an autonomous, DnaK-independent fashion. Unfolded proteins bind initially to DnaJ; upon interaction with the DnaJ-bound protein, DnaK hydrolyzes its bound ATP, resulting in the formation of a stable complex. GrpE releases ADP from DnaK; ATP binding to DnaK triggers the release of the substrate protein, thus completing the reaction cycle. Several rounds of ATP-dependent interactions between DnaJ, DnaK and GrpE are required for fully efficient folding. Also involved, together with DnaK and GrpE, in the DNA replication of plasmids through activation of initiation proteins. This chain is Chaperone protein DnaJ, found in Methylobacterium sp. (strain 4-46).